We begin with the raw amino-acid sequence, 366 residues long: RNA 3'-terminal phosphate cyclase (366 aa).

The ATP site is built by Gln-104, Pro-131, Tyr-294, Asp-297, Gln-298, and His-320. Residue His-320 is the Tele-AMP-histidine intermediate of the active site.

It belongs to the RNA 3'-terminal cyclase family. Type 1 subfamily. Detected in retinal ganglion cells (RGCs) (at protein level).

The protein resides in the nucleus. It localises to the nucleoplasm. It carries out the reaction a 3'-end 3'-phospho-ribonucleotide-RNA + ATP = a 3'-end 2',3'-cyclophospho-ribonucleotide-RNA + AMP + diphosphate. Its function is as follows. Catalyzes the conversion of 3'-phosphate to a 2',3'-cyclic phosphodiester at the end of RNA. The mechanism of action of the enzyme occurs in 3 steps: (A) adenylation of the enzyme by ATP; (B) transfer of adenylate to an RNA-N3'P to produce RNA-N3'PP5'A; (C) and attack of the adjacent 2'-hydroxyl on the 3'-phosphorus in the diester linkage to produce the cyclic end product. Likely functions in some aspects of cellular RNA processing. Function plays an important role in regulating axon regeneration by inhibiting central nervous system (CNS) axon regeneration following optic nerve injury. In Mus musculus (Mouse), this protein is RNA 3'-terminal phosphate cyclase.